The sequence spans 346 residues: uncharacterized protein (346 aa).

A helical membrane pass occupies residues 7–27; it reads AMVILLIICGTYVLFIQYGSV. Positions 29 to 48 are disordered; the sequence is EKKSNDSEPQVSNEEAQSGK. Residues 35–44 show a composition bias toward polar residues; that stretch reads SEPQVSNEEA. Residues 231-342 enclose the SCP domain; sequence LDLTNVIRVK…VDRKYYTQNF (112 aa).

It localises to the cell membrane. This is an uncharacterized protein from Bacillus subtilis (strain 168).